We begin with the raw amino-acid sequence, 341 residues long: Cathepsin B-like cysteine proteinase 1 (341 aa).

A signal peptide spans Met1–Ala19. Residues Glu20–Asn88 constitute a propeptide, activation peptide. Residue Asn103 is glycosylated (N-linked (GlcNAc...) asparagine). 6 cysteine pairs are disulfide-bonded: Cys104–Cys133, Cys116–Cys160, Cys152–Cys218, Cys153–Cys156, Cys189–Cys222, and Cys197–Cys209. Cys119 is an active-site residue. The N-linked (GlcNAc...) asparagine glycan is linked to Asn202. Residues His288 and Asn308 contribute to the active site.

This sequence belongs to the peptidase C1 family.

Functionally, expression of the protease correlates with blood-feeding and suggests a role for the protease in blood digestion. In Ostertagia ostertagi (Brown stomach worm), this protein is Cathepsin B-like cysteine proteinase 1 (CP-1).